Reading from the N-terminus, the 622-residue chain is Interleukin-1 receptor-associated kinase-like 2 (622 aa).

One can recognise a Death domain in the interval 13 to 94; the sequence is LDDLCRNIDT…RAAQIVLSWK (82 aa). The Protein kinase domain maps to 208–473; that stretch reads FDQSHRISEG…LPEACEEAWA (266 aa). Residues 214 to 222, lysine 235, and 335 to 338 contribute to the ATP site; these read ISEGTFADI and KSAN. 2 disordered regions span residues 511–532 and 553–591; these read RVSE…VDNS and LFTG…ETSW. 2 stretches are compositionally biased toward polar residues: residues 513–523 and 561–590; these read SEATGSSSNTP and QPST…TETS.

Belongs to the protein kinase superfamily. TKL Ser/Thr protein kinase family. Pelle subfamily. Interacts with MYD88. IL-1 stimulation leads to the formation of a signaling complex which dissociates from the IL-1 receptor following the binding of PELI1. In terms of tissue distribution, ubiquitously expressed, with a higher expression observed in brain, spleen and liver. Isoform 1 and isoform 2 are considered agonist and isoform 3 and isoform 4 are considered antagonist.

Functionally, binds to the IL-1 type I receptor following IL-1 engagement, triggering intracellular signaling cascades leading to transcriptional up-regulation and mRNA stabilization. The polypeptide is Interleukin-1 receptor-associated kinase-like 2 (Irak2) (Mus musculus (Mouse)).